A 357-amino-acid polypeptide reads, in one-letter code: S-adenosyl-L-methionine:benzoic acid/salicylic acid carboxyl methyltransferase 1 (357 aa).

Tyr-18 contacts S-adenosyl-L-homocysteine. Benzoate is bound at residue Gln-25. Positions 59, 64, 96, 97, 135, and 136 each coordinate S-adenosyl-L-homocysteine. Benzoate is bound at residue Trp-157. Asn-168, Asp-254, Phe-256, and Asn-257 together coordinate Mg(2+). Position 260 (Gln-260) interacts with benzoate.

Belongs to the methyltransferase superfamily. Type-7 methyltransferase family. Predominantly expressed in petal limbs and tubes of corollas.

It catalyses the reaction benzoate + S-adenosyl-L-methionine = methyl benzoate + S-adenosyl-L-homocysteine. It carries out the reaction salicylate + S-adenosyl-L-methionine = methyl salicylate + S-adenosyl-L-homocysteine. Its pathway is aromatic compound metabolism. In terms of biological role, converts benzoic acid into the volatile ester methyl benzoates. This scent, mostly produced in a rhythmical, diurnal manner, attracts the pollinators. In Petunia hybrida (Petunia), this protein is S-adenosyl-L-methionine:benzoic acid/salicylic acid carboxyl methyltransferase 1.